We begin with the raw amino-acid sequence, 459 residues long: UDP-glycosyltransferase 78D3 (459 aa).

Residues 338–340, 355–363, and 377–380 contribute to the UDP-alpha-D-glucose site; these read APQ, HGGWNSVLE, and FGDH.

Belongs to the UDP-glycosyltransferase family.

Its function is as follows. Possesses low quercetin 3-O-glucosyltransferase activity in vitro. The sequence is that of UDP-glycosyltransferase 78D3 (UGT78D3) from Arabidopsis thaliana (Mouse-ear cress).